Here is a 61-residue protein sequence, read N- to C-terminus: Pleurocidin-like peptide WF3 (61 aa).

The N-terminal stretch at 1-22 is a signal peptide; it reads MKFTATFLVLSLVVLMAEPGEC. The propeptide occupies 48–61; sequence YDEQQELNKRAVDE.

Belongs to the pleurocidin family.

It is found in the secreted. Functionally, antimicrobial peptide. This chain is Pleurocidin-like peptide WF3 (ple3), found in Pseudopleuronectes americanus (Winter flounder).